The sequence spans 267 residues: Cilia- and flagella-associated protein 300 (267 aa).

Belongs to the CFAP300 family. Interacts with DNAAF2.

It localises to the cytoplasm. The protein localises to the cytoskeleton. Its subcellular location is the cilium axoneme. Cilium- and flagellum-specific protein that plays a role in axonemal structure organization and motility. May play a role in outer and inner dynein arm assembly. This chain is Cilia- and flagella-associated protein 300, found in Rattus norvegicus (Rat).